Consider the following 213-residue polypeptide: LexA repressor (213 aa).

The H-T-H motif DNA-binding region spans 29–49 (RAEIAQALGFRSPNAAEDHLK). Active-site for autocatalytic cleavage activity residues include Ser-131 and Lys-168.

The protein belongs to the peptidase S24 family. In terms of assembly, homodimer.

It carries out the reaction Hydrolysis of Ala-|-Gly bond in repressor LexA.. Represses a number of genes involved in the response to DNA damage (SOS response), including recA and lexA. In the presence of single-stranded DNA, RecA interacts with LexA causing an autocatalytic cleavage which disrupts the DNA-binding part of LexA, leading to derepression of the SOS regulon and eventually DNA repair. The chain is LexA repressor from Bordetella avium (strain 197N).